Reading from the N-terminus, the 245-residue chain is Keratin-associated protein 10-12 (245 aa).

A run of 19 repeats spans residues 36 to 40 (CCEPP), 41 to 45 (CCAPA), 62 to 66 (CCRVT), 84 to 88 (CCQQS), 94 to 98 (CCTSS), 104 to 108 (CCVPV), 109 to 113 (CCKTV), 114 to 118 (CCKPV), 119 to 123 (CCMPV), 124 to 128 (CCGPS), 131 to 135 (CCQQS), 141 to 145 (CCISS), 151 to 155 (CCVPV), 156 to 160 (CCKPI), 161 to 165 (CCVPV), 173 to 177 (CCQQS), 183 to 187 (CCTTS), 188 to 192 (CCRPS), and 214 to 218 (CCVPT). A 19 X 5 AA repeats of C-C-X(3) region spans residues 36 to 218 (CCEPPCCAPA…VPVPSCCVPT (183 aa)).

The protein belongs to the KRTAP type 10 family. Interacts with hair keratins. As to expression, restricted to a narrow region of the hair fiber cuticle, lying approximately 20 cell layers above the apex of the dermal papilla of the hair root; not detected in any other tissues.

In terms of biological role, in the hair cortex, hair keratin intermediate filaments are embedded in an interfilamentous matrix, consisting of hair keratin-associated proteins (KRTAP), which are essential for the formation of a rigid and resistant hair shaft through their extensive disulfide bond cross-linking with abundant cysteine residues of hair keratins. The matrix proteins include the high-sulfur and high-glycine-tyrosine keratins. This Homo sapiens (Human) protein is Keratin-associated protein 10-12 (KRTAP10-12).